The following is a 352-amino-acid chain: Protein RecA (352 aa).

67 to 74 contributes to the ATP binding site; it reads GPESSGKT.

It belongs to the RecA family.

It is found in the cytoplasm. Functionally, can catalyze the hydrolysis of ATP in the presence of single-stranded DNA, the ATP-dependent uptake of single-stranded DNA by duplex DNA, and the ATP-dependent hybridization of homologous single-stranded DNAs. It interacts with LexA causing its activation and leading to its autocatalytic cleavage. The chain is Protein RecA from Enterobacter sp. (strain 638).